Consider the following 276-residue polypeptide: Diaminopimelate epimerase (276 aa).

Substrate is bound by residues Asn13, Gln46, and Asn66. The active-site Proton donor is Cys75. Substrate-binding positions include 76–77, Asn159, Asn192, and 210–211; these read GN and ER. The active-site Proton acceptor is the Cys219. Substrate is bound at residue 220–221; that stretch reads GS.

Belongs to the diaminopimelate epimerase family. In terms of assembly, homodimer.

The protein resides in the cytoplasm. The catalysed reaction is (2S,6S)-2,6-diaminopimelate = meso-2,6-diaminopimelate. It participates in amino-acid biosynthesis; L-lysine biosynthesis via DAP pathway; DL-2,6-diaminopimelate from LL-2,6-diaminopimelate: step 1/1. In terms of biological role, catalyzes the stereoinversion of LL-2,6-diaminopimelate (L,L-DAP) to meso-diaminopimelate (meso-DAP), a precursor of L-lysine and an essential component of the bacterial peptidoglycan. The polypeptide is Diaminopimelate epimerase (Colwellia psychrerythraea (strain 34H / ATCC BAA-681) (Vibrio psychroerythus)).